Consider the following 351-residue polypeptide: Probable galacturonosyltransferase-like 4 (351 aa).

At 1 to 8 (MASRSLSY) the chain is on the cytoplasmic side. A helical; Signal-anchor for type II membrane protein membrane pass occupies residues 9 to 29 (TQLLGLLSFILLLVTTTTMAV). Over 30–351 (RVGVILHKPS…YRSSRHSLEE (322 aa)) the chain is Lumenal. 2 N-linked (GlcNAc...) asparagine glycosylation sites follow: Asn96 and Asn203.

This sequence belongs to the glycosyltransferase 8 family.

The protein localises to the golgi apparatus membrane. The protein operates within glycan metabolism; pectin biosynthesis. Its function is as follows. May be involved in pectin and/or xylans biosynthesis in cell walls. This Arabidopsis thaliana (Mouse-ear cress) protein is Probable galacturonosyltransferase-like 4 (GATL4).